Consider the following 66-residue polypeptide: Large ribosomal subunit protein bL33c (66 aa).

It belongs to the bacterial ribosomal protein bL33 family.

It localises to the plastid. Its subcellular location is the chloroplast. The sequence is that of Large ribosomal subunit protein bL33c from Chloranthus spicatus (Chulantree).